The following is a 1205-amino-acid chain: Plasma membrane calcium-transporting ATPase 4 (1205 aa).

The Cytoplasmic segment spans residues 1-100 (MTNPPGQSVS…KTFLELVWEA (100 aa)). Residues 101–121 (LQDVTLIILEIAAIISLVLSF) traverse the membrane as a helical segment. Over 122-147 (YRPPGGDNEICGHIASSPEEEEEGET) the chain is Extracellular. Residues 148-168 (GWIEGAAILASVIIVVLVTAF) traverse the membrane as a helical segment. Residues 169 to 369 (NDWSKEKQFR…LAVQIGKAGL (201 aa)) are Cytoplasmic-facing. A disordered region spans residues 294-318 (DDDDKKKKGKKQGAPENRNKAKTQD). S329 and S335 each carry phosphoserine. Residues 370 to 390 (IMSVLTVVILILYFVVDNFVI) traverse the membrane as a helical segment. Residues 391-409 (QRREWLPECTPVYIQYFVK) are Extracellular-facing. The helical transmembrane segment at 410–430 (FFIIGVTVLVVAVPEGLPLAV) threads the bilayer. Residues 431–844 (TISLAYSVKK…RNVYDSISKF (414 aa)) are Cytoplasmic-facing. Catalysis depends on D466, which acts as the 4-aspartylphosphate intermediate. Mg(2+)-binding residues include D786 and D790. A helical membrane pass occupies residues 845–865 (LQFQLTVNVVAVIVAFTGACI). At 866–872 (TQDSPLK) the chain is on the extracellular side. Residues 873 to 893 (AVQMLWVNLIMDTFASLALAT) traverse the membrane as a helical segment. The Cytoplasmic segment spans residues 894–919 (EPPTESLLRRRPYGRNKPLISRTMMK). Residues 920-942 (NILGHAVYQLLIVFLLVFAGDTL) form a helical membrane-spanning segment. Residues 943–956 (FDIDSGRKAPLNSP) lie on the Extracellular side of the membrane. A helical transmembrane segment spans residues 957–979 (PSQHYTIVFNTFVLMQLFNEINA). Residues 980 to 995 (RKIHGEKNVFAGVYRN) lie on the Cytoplasmic side of the membrane. The helical transmembrane segment at 996–1016 (IIFCTVVLGTFFCQIMIVELG) threads the bilayer. The Extracellular segment spans residues 1017–1029 (GKPFSCTSLTMEQ). Residues 1030–1050 (WMWCLFIGIGELLWGQVISAI) traverse the membrane as a helical segment. Residues 1051–1205 (PTKSLKFLKE…SPLPSLETPV (155 aa)) lie on the Cytoplasmic side of the membrane. S1065 and S1071 each carry phosphoserine. The residue at position 1072 (R1072) is an Omega-N-methylarginine. The segment at 1087 to 1104 (LRRGQILWVRGLNRIQTQ) is calmodulin-binding subdomain A. T1103 bears the Phosphothreonine; by PKC mark. Positions 1105-1114 (IRVVKLFHNN) are calmodulin-binding subdomain B. Position 1145 is a phosphoserine (S1145).

This sequence belongs to the cation transport ATPase (P-type) (TC 3.A.3) family. Type IIB subfamily. As to quaternary structure, interacts with PDZD11. Interacts with SLC35G1 and STIM1. Interacts with calmodulin. In terms of tissue distribution, specifically expressed by sperm in testis (at protein level).

It localises to the membrane. It is found in the cell projection. The protein resides in the cilium. The protein localises to the flagellum membrane. It carries out the reaction Ca(2+)(in) + ATP + H2O = Ca(2+)(out) + ADP + phosphate + H(+). Activated by calcium/calmodulin. Its function is as follows. Calcium/calmodulin-regulated and magnesium-dependent enzyme that catalyzes the hydrolysis of ATP coupled with the transport of calcium out of the cell. By regulating sperm cell calcium homeostasis, may play a role in sperm motility. This Mus musculus (Mouse) protein is Plasma membrane calcium-transporting ATPase 4.